We begin with the raw amino-acid sequence, 155 residues long: Ribosomal RNA large subunit methyltransferase H (155 aa).

S-adenosyl-L-methionine-binding positions include L72, G103, and 122 to 127 (LSALTL).

The protein belongs to the RNA methyltransferase RlmH family. Homodimer.

Its subcellular location is the cytoplasm. The enzyme catalyses pseudouridine(1915) in 23S rRNA + S-adenosyl-L-methionine = N(3)-methylpseudouridine(1915) in 23S rRNA + S-adenosyl-L-homocysteine + H(+). Its function is as follows. Specifically methylates the pseudouridine at position 1915 (m3Psi1915) in 23S rRNA. In Escherichia fergusonii (strain ATCC 35469 / DSM 13698 / CCUG 18766 / IAM 14443 / JCM 21226 / LMG 7866 / NBRC 102419 / NCTC 12128 / CDC 0568-73), this protein is Ribosomal RNA large subunit methyltransferase H.